The primary structure comprises 423 residues: MLDILLTNIGQLLTMDQEDGVLRQEAMKTLPVIESGAVGIKDGVIMFVGTAEEAKGLQAREIIDCEGKVVSPGLVDPHTHLVFGGSRENEIALKLQGVPYLEILEQGGGILSTVNATKKASKEELVKKANFHLDRMLSFGVTTVEAKSGYGLDDETEWKQLEVVAQLQKEHPIDLVSTFLGAHAVPKEYKGKSKEFLQWMLDLLPAIKEKELAEFVDIFCETGVFSVEESKEFLLEAKELGFDVKIHADEIDPLGGAEAAAEIGAASADHLVGASDKGIEMLANSNTVATLLPGTTFYLNKESFARGRKMIDEGVAVALATDFNPGSCPTENIQLVMSIAMLKLKMTPEEVWNAVTVNSAYAINRGDVAGKIRVGRKADLVLWDAHHYAYVPYHYGVSHVNTVWKNGNLAYTRGDKAWSKATI.

Residues H78 and H80 each coordinate Fe(3+). 2 residues coordinate Zn(2+): H78 and H80. 4-imidazolone-5-propanoate is bound by residues R87, Y150, and H183. Y150 contacts N-formimidoyl-L-glutamate. H247 contacts Fe(3+). H247 lines the Zn(2+) pocket. Position 250 (E250) interacts with 4-imidazolone-5-propanoate. D322 is a Fe(3+) binding site. D322 is a Zn(2+) binding site. Residues N324 and G326 each coordinate N-formimidoyl-L-glutamate. 4-imidazolone-5-propanoate is bound at residue S327.

The protein belongs to the metallo-dependent hydrolases superfamily. HutI family. It depends on Zn(2+) as a cofactor. The cofactor is Fe(3+).

Its subcellular location is the cytoplasm. The catalysed reaction is 4-imidazolone-5-propanoate + H2O = N-formimidoyl-L-glutamate. It participates in amino-acid degradation; L-histidine degradation into L-glutamate; N-formimidoyl-L-glutamate from L-histidine: step 3/3. Catalyzes the hydrolytic cleavage of the carbon-nitrogen bond in imidazolone-5-propanoate to yield N-formimidoyl-L-glutamate. It is the third step in the universal histidine degradation pathway. The polypeptide is Imidazolonepropionase (Bacillus cytotoxicus (strain DSM 22905 / CIP 110041 / 391-98 / NVH 391-98)).